The following is a 102-amino-acid chain: ATP-dependent Clp protease adapter protein ClpS (102 aa).

The protein belongs to the ClpS family. Binds to the N-terminal domain of the chaperone ClpA.

In terms of biological role, involved in the modulation of the specificity of the ClpAP-mediated ATP-dependent protein degradation. This chain is ATP-dependent Clp protease adapter protein ClpS, found in Shewanella sp. (strain ANA-3).